The primary structure comprises 100 residues: Urease subunit gamma (100 aa).

It belongs to the urease gamma subunit family. As to quaternary structure, heterotrimer of UreA (gamma), UreB (beta) and UreC (alpha) subunits. Three heterotrimers associate to form the active enzyme.

The protein resides in the cytoplasm. It carries out the reaction urea + 2 H2O + H(+) = hydrogencarbonate + 2 NH4(+). It functions in the pathway nitrogen metabolism; urea degradation; CO(2) and NH(3) from urea (urease route): step 1/1. The protein is Urease subunit gamma of Mycolicibacterium gilvum (strain PYR-GCK) (Mycobacterium gilvum (strain PYR-GCK)).